Here is a 549-residue protein sequence, read N- to C-terminus: FERM domain-containing protein 1 (549 aa).

The tract at residues 1 to 40 is disordered; it reads MAVPPRGRGIDPARTNPDTFPPSGARCMEPSPERPACSQQ. In terms of domain architecture, FERM spans 54–369; it reads RDVLVLLPSR…DELELDLASR (316 aa). Disordered stretches follow at residues 377-400 and 422-464; these read SSQH…YTSG and HGLH…GQSA. Positions 430 to 443 are enriched in low complexity; it reads SSSPRTSRSHPSTR. The span at 444–462 shows a compositional bias: polar residues; the sequence is GDSQATRQEPCTQVRTRGQ.

The sequence is that of FERM domain-containing protein 1 (FRMD1) from Homo sapiens (Human).